We begin with the raw amino-acid sequence, 180 residues long: UPF0227 protein YcfP (180 aa).

It belongs to the UPF0227 family.

This Salmonella paratyphi A (strain ATCC 9150 / SARB42) protein is UPF0227 protein YcfP.